The chain runs to 76 residues: Small ribosomal subunit protein bS18 (76 aa).

It belongs to the bacterial ribosomal protein bS18 family. As to quaternary structure, part of the 30S ribosomal subunit. Forms a tight heterodimer with protein bS6.

Functionally, binds as a heterodimer with protein bS6 to the central domain of the 16S rRNA, where it helps stabilize the platform of the 30S subunit. The protein is Small ribosomal subunit protein bS18 of Azotobacter vinelandii (strain DJ / ATCC BAA-1303).